Consider the following 303-residue polypeptide: Dipeptide transport system permease protein DppB (303 aa).

7 consecutive transmembrane segments (helical) span residues 9-29 (LGLLLLTLFLIVTLTFFMMQV), 62-82 (YFIYVGHMFTGNFGTSFIYTN), 93-113 (LPVSMQLGTQALILGTVLGAL), 129-149 (IFGFLSVLGISVPSFVIGTLI), 166-186 (GTFSQTIMPTIALSFAPMAVV), 227-247 (IPMLTLIGPMAAGLLTGSVLI), and 269-289 (FPVIMATTIVYAVILMVFILV). Residues 93-290 (LPVSMQLGTQ…VILMVFILVT (198 aa)) enclose the ABC transmembrane type-1 domain.

It belongs to the binding-protein-dependent transport system permease family. OppBC subfamily. As to quaternary structure, the complex is composed of two ATP-binding proteins (DppD and DppF), two transmembrane proteins (DppB and DppC) and a solute-binding protein (DppA).

Its subcellular location is the cell membrane. Functionally, part of the ABC transporter DppABCDF involved in dipeptide transport. Responsible for the translocation of the substrate across the membrane. This chain is Dipeptide transport system permease protein DppB, found in Lactococcus lactis subsp. cremoris (strain MG1363).